Reading from the N-terminus, the 883-residue chain is Glutamate receptor 2 (883 aa).

The N-terminal stretch at 1–24 is a signal peptide; the sequence is MQKIMHISVLLSPVLWGLIFGVSS. Residues 25 to 543 lie on the Extracellular side of the membrane; it reads NSIQIGGLFP…GVFSFLDPLA (519 aa). Cysteines 78 and 330 form a disulfide. N-linked (GlcNAc...) asparagine glycans are attached at residues Asn-256, Asn-370, Asn-406, and Asn-413. Pro-499, Thr-501, and Arg-506 together coordinate L-glutamate. A helical transmembrane segment spans residues 544 to 564; that stretch reads YEIWMCIVFAYIGVSVVLFLV. Topologically, residues 565–591 are cytoplasmic; the sequence is SRFSPYEWHTEEFEDGRETQSSESTNE. Residues 592-607 constitute an intramembrane region (helical; Pore-forming); the sequence is FGIFNSLWFSLGAFMQ. An intramembrane segment occupies 608–610; that stretch reads QGC. The S-palmitoyl cysteine moiety is linked to residue Cys-610. Topologically, residues 611 to 616 are cytoplasmic; it reads DISPRS. A helical transmembrane segment spans residues 617–637; it reads LSGRIVGGVWWFFTLIIISSY. Topologically, residues 638–812 are extracellular; the sequence is TANLAAFLTV…EKTSALSLSN (175 aa). Residues Ser-675 and Thr-676 each contribute to the L-glutamate site. Ser-683 is modified (phosphoserine; by PKC). Ser-717 bears the Phosphoserine; by PKG mark. An L-glutamate-binding site is contributed by Glu-726. The cysteines at positions 739 and 794 are disulfide-linked. A helical transmembrane segment spans residues 813 to 833; the sequence is VAGVFYILVGGLGLAMLVALI. Over 834–883 the chain is Cytoplasmic; sequence EFCYKSRAEAKRMKVAKNAQNINPSSSQNSQNFATYKEGYNVYGIESVKI. The S-palmitoyl cysteine moiety is linked to residue Cys-836. 2 positions are modified to phosphoserine: Ser-860 and Ser-863. The interval 867–877 is required for interaction with IQSEC1; that stretch reads ATYKEGYNVYG. Tyr-876 is modified (phosphotyrosine). Residue Ser-880 is modified to Phosphoserine.

Belongs to the glutamate-gated ion channel (TC 1.A.10.1) family. GRIA2 subfamily. Homotetramer or heterotetramer of pore-forming glutamate receptor subunits. Tetramers may be formed by the dimerization of dimers. May interact with MPP4. Forms a ternary complex with GRIP1 and CSPG4. Interacts with ATAD1 in an ATP-dependent manner. ATAD1-catalyzed ATP hydrolysis disrupts binding to ATAD1 and to GRIP1 and leads to AMPAR complex disassembly. Interacts with GRIP1 and GRIP2. Interacts with NSF via its C-terminus. Isoform 1, but not isoform 3, interacts with PICK1. Interacts with CACNG2. Interacts with GRIA1 and SYNDIG1. Part of a complex containing GRIA2, NSF and NAPA and/or NAPB. Interacts with SNX27 (via PDZ domain); the interaction is required for recycling to the plasma membrane when endocytosed and prevent degradation in lysosomes. Interacts with LRFN1. Found in a complex with GRIA1, GRIA3, GRIA4, CNIH2, CNIH3, CACNG2, CACNG3, CACNG4, CACNG5, CACNG7 and CACNG8. Interacts with CACNG5. Interacts with OLFM2. Interacts with AP4B1, AP4E1 and AP4M1; probably indirect it mediates the somatodendritic localization of GRIA2 in neurons. Forms a complex with GRIP1, NSG1 and STX12; controls the intracellular fate of AMPAR and the endosomal sorting of the GRIA2 subunit toward recycling and membrane targeting. Interacts with IQSEC1; the interaction is required for ARF6 activation. Interacts (heterotetramer form) with CNIH2 and CNIH3; this interaction promotes expression at the plasma membrane and extensively modulates their gating properties by slowing deactivation and desensitization kinetics. Post-translationally, palmitoylated. Depalmitoylated upon L-glutamate stimulation. Cys-610 palmitoylation leads to Golgi retention and decreased cell surface expression. In contrast, Cys-836 palmitoylation does not affect cell surface expression but regulates stimulation-dependent endocytosis. Ubiquitinated by RNF167, leading to its degradation. In terms of processing, phosphorylation at Tyr-876 is required for interaction with IQSEC1 and ARF6 activation, which in turn triggers AMPAR internalization for persistent synaptic depression. Post-translationally, N-glycosylated.

The protein resides in the cell membrane. It is found in the postsynaptic cell membrane. Its subcellular location is the postsynaptic density membrane. The catalysed reaction is Ca(2+)(in) = Ca(2+)(out). The enzyme catalyses Na(+)(in) = Na(+)(out). In terms of biological role, ionotropic glutamate receptor that functions as a ligand-gated cation channel, gated by L-glutamate and glutamatergic agonists such as alpha-amino-3-hydroxy-5-methyl-4-isoxazolepropionic acid (AMPA), quisqualic acid, and kainic acid. L-glutamate acts as an excitatory neurotransmitter at many synapses in the central nervous system and plays an important role in fast excitatory synaptic transmission. Binding of the excitatory neurotransmitter L-glutamate induces a conformation change, leading to the opening of the cation channel, and thereby converts the chemical signal to an electrical impulse upon entry of monovalent and divalent cations such as sodium and calcium. The receptor then desensitizes rapidly and enters in a transient inactive state, characterized by the presence of bound agonist. In the presence of CACNG4 or CACNG7 or CACNG8, shows resensitization which is characterized by a delayed accumulation of current flux upon continued application of L-glutamate. Through complex formation with NSG1, GRIP1 and STX12 controls the intracellular fate of AMPAR and the endosomal sorting of the GRIA2 subunit toward recycling and membrane targeting. This is Glutamate receptor 2 from Homo sapiens (Human).